The primary structure comprises 864 residues: Leucine--tRNA ligase (864 aa).

A 'HIGH' region motif is present at residues 42-52 (PYPSGKLHMGH). Residues 624–628 (KMSKS) carry the 'KMSKS' region motif. Lys-627 contacts ATP.

The protein belongs to the class-I aminoacyl-tRNA synthetase family.

The protein localises to the cytoplasm. It carries out the reaction tRNA(Leu) + L-leucine + ATP = L-leucyl-tRNA(Leu) + AMP + diphosphate. This chain is Leucine--tRNA ligase, found in Burkholderia ambifaria (strain MC40-6).